A 361-amino-acid polypeptide reads, in one-letter code: Protein SSUH2 homolog (361 aa).

It is found in the cytoplasm. Its subcellular location is the nucleus. Functionally, plays a role in odontogenesis. This Danio rerio (Zebrafish) protein is Protein SSUH2 homolog.